Consider the following 611-residue polypeptide: Immunoglobulin superfamily member 8 (611 aa).

Residues 1-25 (MGVPSPTPLSSLLLLLLILGTRCYA) form the signal peptide. Ig-like C2-type domains are found at residues 26–143 (RQVH…AKVE), 160–284 (PRGR…WVQV), 301–422 (SQLA…EAAS), and 429–554 (PVHV…ADYS). Over 26 to 577 (RQVHVPRGPL…VYPYTHAVDT (552 aa)) the chain is Extracellular. Cysteines 47 and 125 form a disulfide. Asparagine 48 and asparagine 137 each carry an N-linked (GlcNAc...) asparagine glycan. The cysteines at positions 184 and 268 are disulfide-linked. The EWI motif motif lies at 272 to 274 (EWI). Cystine bridges form between cysteine 324–cysteine 404 and cysteine 460–cysteine 542. N-linked (GlcNAc...) asparagine glycosylation is present at asparagine 325. Serine 516 carries the phosphoserine modification. A helical transmembrane segment spans residues 578–598 (LFVPLLVGTGVALVTGASVLA). The Cytoplasmic segment spans residues 599–611 (TITCCFMKRMRKR). S-palmitoyl cysteine attachment occurs at residues cysteine 602 and cysteine 603.

Interacts directly with CD82 and CD9/tetraspanin-29. Also interacts with integrin alpha-3/beta-1 and integrin alpha-4/beta-1. Part of a complex composed of CD9, PTGFRN and CD81. Interacts with CD81/tetraspanin-28. In terms of tissue distribution, expressed in lymphocytes as well as in many tissues with higher expression in brain. Detected in all regions of the brain with weak expression in the pituitary. Expressed selectively by neurons but not by glial cells. Expressed in myoblasts (at protein level).

It localises to the cell membrane. Functionally, member of the immunoglobulin superfamily (IgSF) that links tetraspanin-enriched microdomains to the actin cytoskeleton and plays several important roles in innate and adaptive immunity. Acts as an inducible receptor of HSPA8 on dendritic cells to enhance the CCL21/SLC-dependent migration of activated mature dendritic cells while attenuating their antigen-specific stimulatory capacities. In complex with alpha-actinins ACTN1 and ACTN4, regulates actin dynamics in the immune synapse and subsequent T-cell activation. Inhibits the entry of several viruses such as hepatitis C Virus (HCV) or HIV-1. Mechanistically, promotes a change in CD81 organization at the plasma membrane by significantly restricting its diffusion which in turn influences CD81 interaction with Claudin-1/CLDN1, preventing CLDN1 from acting as a co-receptor required for HCV entry. Accumulates at the presynaptic terminal, the producer cell side of the virological synapse, to prevent HIV-1 Env-mediated cell-cell fusion. Highly expressed on malignant cells with antigen presentation defects, interacts with NK receptor KLRA9 to suppress NK-cell cytotoxicity. May participate in the regulation of neurite outgrowth and maintenance of the neural network in the adult brain. The polypeptide is Immunoglobulin superfamily member 8 (Igsf8) (Mus musculus (Mouse)).